Reading from the N-terminus, the 434-residue chain is G2/mitotic-specific cyclin-2 (434 aa).

This sequence belongs to the cyclin family. Cyclin AB subfamily. As to quaternary structure, interacts with the CDC2 protein kinase to form a serine/threonine kinase holoenzyme complex also known as maturation promoting factor (MPF). The cyclin subunit imparts substrate specificity to the complex.

Its function is as follows. Essential for the control of the cell cycle at the G2/M (mitosis) transition. The chain is G2/mitotic-specific cyclin-2 from Medicago sativa subsp. varia (Alfalfa).